Reading from the N-terminus, the 661-residue chain is Polyadenylate-binding protein, cytoplasmic and nuclear (661 aa).

A compositionally biased stretch (polar residues) spans 1–11 (MSAAETNQVQE). A disordered region spans residues 1–61 (MSAAETNQVQ…SAEEQGESSG (61 aa)). The segment covering 20–51 (SSSSPAAGGATTATTTNNAESSDATSSSVPAD) has biased composition (low complexity). RRM domains are found at residues 67-145 (ASLY…WSQR), 155-232 (GNIF…KHVS), 248-325 (TNIY…RAQK), and 351-428 (VNLF…LAQR). Residues 473-563 (FPPNGRGNAP…PNRPAGGNVP (91 aa)) are disordered. Positions 501–511 (EQWPRPGPNGQ) are enriched in pro residues. A compositionally biased stretch (polar residues) spans 523 to 532 (QDFNGQNMRP). A compositionally biased stretch (low complexity) spans 533–549 (QQQQQQQQQQQQQQQQQ). The region spanning 563-644 (PAKDLAALIA…ALNAFEEYKN (82 aa)) is the PABC domain.

This sequence belongs to the polyadenylate-binding protein type-1 family.

It is found in the cytoplasm. The protein localises to the nucleus. Functionally, binds the poly(A) tail of mRNA. Appears to be an important mediator of the multiple roles of the poly(A) tail in mRNA biogenesis, stability and translation. In the nucleus, involved in both mRNA cleavage and polyadenylation. Is also required for efficient mRNA export to the cytoplasm. Acts in concert with a poly(A)-specific nuclease (PAN) to affect poly(A) tail shortening, which may occur concomitantly with either nucleocytoplasmic mRNA transport or translational initiation. In the cytoplasm, stimulates translation initiation and regulates mRNA decay through translation termination-coupled poly(A) shortening, probably mediated by PAN. The protein is Polyadenylate-binding protein, cytoplasmic and nuclear (PAB1) of Lodderomyces elongisporus (strain ATCC 11503 / CBS 2605 / JCM 1781 / NBRC 1676 / NRRL YB-4239) (Yeast).